Reading from the N-terminus, the 251-residue chain is Pyrroloquinoline-quinone synthase (251 aa).

This sequence belongs to the PqqC family.

The enzyme catalyses 6-(2-amino-2-carboxyethyl)-7,8-dioxo-1,2,3,4,7,8-hexahydroquinoline-2,4-dicarboxylate + 3 O2 = pyrroloquinoline quinone + 2 H2O2 + 2 H2O + H(+). Its pathway is cofactor biosynthesis; pyrroloquinoline quinone biosynthesis. Functionally, ring cyclization and eight-electron oxidation of 3a-(2-amino-2-carboxyethyl)-4,5-dioxo-4,5,6,7,8,9-hexahydroquinoline-7,9-dicarboxylic-acid to PQQ. The sequence is that of Pyrroloquinoline-quinone synthase from Klebsiella pneumoniae subsp. pneumoniae (strain ATCC 700721 / MGH 78578).